Reading from the N-terminus, the 509-residue chain is Zinc finger CCCH-type with G patch domain-containing protein (509 aa).

The C3H1-type zinc-finger motif lies at Pro-155–Leu-178. The tract at residues Glu-253–Asp-277 is disordered. Positions Thr-310–Glu-356 constitute a G-patch domain. The disordered stretch occupies residues Gly-409–Gln-430. Residues Glu-411–Ala-420 show a composition bias toward basic and acidic residues.

The protein resides in the nucleus. Its function is as follows. Transcription repressor. The chain is Zinc finger CCCH-type with G patch domain-containing protein from Drosophila persimilis (Fruit fly).